The following is a 106-amino-acid chain: Nucleoid-associated protein XCV1128 (106 aa).

The tract at residues 81–106 (IDAESKDRMGSATAGMQLPPGMKLPF) is disordered.

This sequence belongs to the YbaB/EbfC family. Homodimer.

It localises to the cytoplasm. It is found in the nucleoid. Binds to DNA and alters its conformation. May be involved in regulation of gene expression, nucleoid organization and DNA protection. This is Nucleoid-associated protein XCV1128 from Xanthomonas euvesicatoria pv. vesicatoria (strain 85-10) (Xanthomonas campestris pv. vesicatoria).